We begin with the raw amino-acid sequence, 242 residues long: ATP synthase subunit a (242 aa).

Helical transmembrane passes span S29 to V49, V83 to M103, I114 to Y134, F140 to I160, V181 to F201, and I206 to I226.

Belongs to the ATPase A chain family. In terms of assembly, F-type ATPases have 2 components, CF(1) - the catalytic core - and CF(0) - the membrane proton channel. CF(1) has five subunits: alpha(3), beta(3), gamma(1), delta(1), epsilon(1). CF(0) has three main subunits: a(1), b(2) and c(9-12). The alpha and beta chains form an alternating ring which encloses part of the gamma chain. CF(1) is attached to CF(0) by a central stalk formed by the gamma and epsilon chains, while a peripheral stalk is formed by the delta and b chains.

Its subcellular location is the cell inner membrane. Its function is as follows. Key component of the proton channel; it plays a direct role in the translocation of protons across the membrane. The polypeptide is ATP synthase subunit a (Orientia tsutsugamushi (strain Boryong) (Rickettsia tsutsugamushi)).